The chain runs to 165 residues: Putative glycine-rich cell wall structural protein 1 (165 aa).

The first 23 residues, 1 to 23, serve as a signal peptide directing secretion; sequence MARKVIALAFLLLLTISLSKSNA. R2; Tyr-rich repeat units lie at residues 56-62 and 93-99; these read GYGYGYG. The disordered stretch occupies residues 105 to 125; sequence AQGQGSGGGGGGGGGGGGGGS. One copy of the R2; Tyr-rich repeat lies at 132 to 138; that stretch reads GYGYGYG. The interval 146–165 is disordered; that stretch reads GGGGGGGGGGGGSGYVGKHE.

It localises to the secreted. Its subcellular location is the cell wall. In terms of biological role, responsible for plasticity of the cell wall. This chain is Putative glycine-rich cell wall structural protein 1 (GRP-1), found in Oryza sativa subsp. indica (Rice).